The chain runs to 168 residues: UPF0262 protein BBta_0898 (168 aa).

This sequence belongs to the UPF0262 family.

The polypeptide is UPF0262 protein BBta_0898 (Bradyrhizobium sp. (strain BTAi1 / ATCC BAA-1182)).